A 360-amino-acid chain; its full sequence is Peptide chain release factor 1 (360 aa).

Glutamine 237 is subject to N5-methylglutamine.

Belongs to the prokaryotic/mitochondrial release factor family. Post-translationally, methylated by PrmC. Methylation increases the termination efficiency of RF1.

It is found in the cytoplasm. Its function is as follows. Peptide chain release factor 1 directs the termination of translation in response to the peptide chain termination codons UAG and UAA. The polypeptide is Peptide chain release factor 1 (Stutzerimonas stutzeri (strain A1501) (Pseudomonas stutzeri)).